Consider the following 156-residue polypeptide: MRSSAKQEELVKAFKALLKEEKFSSQGEIVAALQEQGFDNINQSKVSRMLTKFGAVRTRNAKMEMVYCLPAELGVPTTSSPLKNLVLDIDYNDAVVVIHTSPGAAQLIARLLDSLGKAEGILGTIAGDDTIFTTPANGFTVKDLYEAILELFDQEL.

This sequence belongs to the ArgR family.

It localises to the cytoplasm. It functions in the pathway amino-acid biosynthesis; L-arginine biosynthesis [regulation]. Functionally, regulates arginine biosynthesis genes. In Shigella boydii serotype 18 (strain CDC 3083-94 / BS512), this protein is Arginine repressor.